Consider the following 298-residue polypeptide: Acetylglutamate kinase (298 aa).

Residues glycine 69 to glycine 70, arginine 91, and asparagine 191 each bind substrate.

The protein belongs to the acetylglutamate kinase family. ArgB subfamily.

It is found in the cytoplasm. It carries out the reaction N-acetyl-L-glutamate + ATP = N-acetyl-L-glutamyl 5-phosphate + ADP. It functions in the pathway amino-acid biosynthesis; L-arginine biosynthesis; N(2)-acetyl-L-ornithine from L-glutamate: step 2/4. In terms of biological role, catalyzes the ATP-dependent phosphorylation of N-acetyl-L-glutamate. The chain is Acetylglutamate kinase from Neisseria meningitidis serogroup C / serotype 2a (strain ATCC 700532 / DSM 15464 / FAM18).